The chain runs to 498 residues: Aldehyde dehydrogenase, mitochondrial (498 aa).

The transit peptide at 1–9 (MLRATLARL) directs the protein to the mitochondrion. Residue 242–247 (GSTAVG) coordinates NAD(+). Glu265 (proton acceptor) is an active-site residue. The Nucleophile role is filled by Cys299.

This sequence belongs to the aldehyde dehydrogenase family.

The protein localises to the mitochondrion. The enzyme catalyses an aldehyde + NAD(+) + H2O = a carboxylate + NADH + 2 H(+). The protein operates within alcohol metabolism; ethanol degradation; acetate from ethanol: step 2/2. Could have an RNA-binding activity in addition of its catalytic role. This chain is Aldehyde dehydrogenase, mitochondrial (ALDH2), found in Leishmania tarentolae (Sauroleishmania tarentolae).